A 342-amino-acid chain; its full sequence is Cell division protein ZipA (342 aa).

Topologically, residues 1 to 6 are periplasmic; that stretch reads MEDLQL. Residues 7–27 form a helical membrane-spanning segment; that stretch reads VLFILGAIAIVAVLVHGFWSI. Residues 28 to 342 are Cytoplasmic-facing; that stretch reads RRQQPKSLKD…DYLHRIRANA (315 aa). Positions 33–57 are disordered; the sequence is KSLKDSPMGNFYKQQADKESPPKRV. The span at 47–57 shows a compositional bias: basic and acidic residues; that stretch reads QADKESPPKRV.

It belongs to the ZipA family. Interacts with FtsZ via their C-terminal domains.

It localises to the cell inner membrane. Its function is as follows. Essential cell division protein that stabilizes the FtsZ protofilaments by cross-linking them and that serves as a cytoplasmic membrane anchor for the Z ring. Also required for the recruitment to the septal ring of downstream cell division proteins. This Shewanella putrefaciens (strain CN-32 / ATCC BAA-453) protein is Cell division protein ZipA.